An 861-amino-acid polypeptide reads, in one-letter code: Glucans biosynthesis glucosyltransferase H (861 aa).

Disordered stretches follow at residues 65 to 89 and 101 to 129; these read RLSA…SVGR and AGEP…SMVP. Composition is skewed to basic and acidic residues over residues 67–76 and 105–114; these read SAREPAKGET and LLKRRPDGTV. A run of 6 helical transmembrane segments spans residues 181–201, 208–228, 532–552, 589–609, 616–636, and 698–718; these read FLLG…TKVL, LLEI…SAGF, VFLT…FLLL, LFSA…LLLV, GGLP…ALLA, and FVLW…LSVM.

It belongs to the glycosyltransferase 2 family. OpgH subfamily.

The protein localises to the cell inner membrane. It functions in the pathway glycan metabolism; osmoregulated periplasmic glucan (OPG) biosynthesis. In terms of biological role, involved in the biosynthesis of osmoregulated periplasmic glucans (OPGs). This is Glucans biosynthesis glucosyltransferase H from Cupriavidus pinatubonensis (strain JMP 134 / LMG 1197) (Cupriavidus necator (strain JMP 134)).